We begin with the raw amino-acid sequence, 98 residues long: Alpha-elicitin MGM-alpha (98 aa).

Intrachain disulfides connect Cys3-Cys71, Cys27-Cys56, and Cys51-Cys95.

It belongs to the elicitin family.

The protein localises to the secreted. Induces local and distal defense responses (incompatible hypersensitive reaction) in plants from the solanaceae and cruciferae families. Elicits leaf necrosis and causes the accumulation of pathogenesis-related proteins. Might interact with the lipidic molecules of the plasma membrane. The polypeptide is Alpha-elicitin MGM-alpha (Phytophthora megasperma (Potato pink rot fungus)).